A 135-amino-acid chain; its full sequence is Histone H3 type 2 (135 aa).

The interval 1–40 (MARTKQTARKSTGGKAPRKQLATKAARKTPATGGVKKPHR) is disordered. N6-methyllysine is present on K5. At K10 the chain carries N6-acetyllysine; alternate. Residue K10 is modified to N6-methyllysine; alternate. Phosphoserine is present on S11. Position 12 is a phosphothreonine (T12). An N6-acetyllysine mark is found at K15, K19, and K24. K28 is modified (N6-acetyllysine; alternate). Position 28 is an N6-methyllysine; alternate (K28). N6-methyllysine is present on residues K36 and K37.

This sequence belongs to the histone H3 family. As to quaternary structure, the nucleosome is a histone octamer containing two molecules each of H2A, H2B, H3 and H4 assembled in one H3-H4 heterotetramer and two H2A-H2B heterodimers. The octamer wraps approximately 147 bp of DNA. Acetylation is generally linked to gene activation. Acetylated to form H3K9ac (11%), H3K14ac (17%), H3K18ac (11%), H3K23ac (16%) and H3K27ac (7%). H3K4, H3K35 and H3K36 are not acetylated. H3K4me prevents acetylation. 32% of the histone H3 are acetylated with, on average, 2.4 acetyl-Lys. They are all continuously deacatylated and re-acetylated with a half-life of approximately 2 minutes. In terms of processing, monomethylated to form H3K4me1 (81%), H3K9me1 (16%), H3K27me1 (25%), H3K35me1 (25%) and H3K36me1 (5%). No methylation at H3K14, H3K18 and H3K23. Methylated by a protein complex that includes Mut11. Set1 methylates specifically H3K4. H3K4me1 is associated with silenced euchromatin. Set3 forms H3K9me1, while H3K9me2 is undetected. H3K9me1 is specifically associated with silent, multi-copy transgenes. Post-translationally, no phosphorylation detected.

It is found in the nucleus. It localises to the chromosome. Functionally, core component of nucleosome. Nucleosomes wrap and compact DNA into chromatin, limiting DNA accessibility to the cellular machineries which require DNA as a template. Histones thereby play a central role in transcription regulation, DNA repair, DNA replication and chromosomal stability. DNA accessibility is regulated via a complex set of post-translational modifications of histones, also called histone code, and nucleosome remodeling. This is Histone H3 type 2 (ch3-II) from Chlamydomonas reinhardtii (Chlamydomonas smithii).